The following is a 206-amino-acid chain: Ribonuclease HII (206 aa).

The RNase H type-2 domain maps to 14-206 (EFICGIDEVG…FKLRQLGEKV (193 aa)). The a divalent metal cation site is built by Asp-20, Glu-21, and Asp-117.

Belongs to the RNase HII family. The cofactor is Mn(2+). Requires Mg(2+) as cofactor.

The protein localises to the cytoplasm. It catalyses the reaction Endonucleolytic cleavage to 5'-phosphomonoester.. In terms of biological role, endonuclease that specifically degrades the RNA of RNA-DNA hybrids. In Chlorobium chlorochromatii (strain CaD3), this protein is Ribonuclease HII.